Reading from the N-terminus, the 114-residue chain is T cell receptor beta variable 3-1 (114 aa).

The signal sequence occupies residues 1-21 (MGCRLLCCVVFCLLQAGPLDT). The Ig-like domain occupies 22-114 (AVSQTPKYLV…SAVYFCASSQ (93 aa)). Cysteines 42 and 110 form a disulfide. A glycan (N-linked (GlcNAc...) asparagine) is linked at Asn76.

Alpha-beta TR is a heterodimer composed of an alpha and beta chain; disulfide-linked. The alpha-beta TR is associated with the transmembrane signaling CD3 coreceptor proteins to form the TR-CD3 (TcR or TCR). The assembly of alpha-beta TR heterodimers with CD3 occurs in the endoplasmic reticulum where a single alpha-beta TR heterodimer associates with one CD3D-CD3E heterodimer, one CD3G-CD3E heterodimer and one CD247 homodimer forming a stable octameric structure. CD3D-CD3E and CD3G-CD3E heterodimers preferentially associate with TR alpha and TR beta chains, respectively. The association of the CD247 homodimer is the last step of TcR assembly in the endoplasmic reticulum and is required for transport to the cell surface.

The protein resides in the cell membrane. V region of the variable domain of T cell receptor (TR) beta chain that participates in the antigen recognition. Alpha-beta T cell receptors are antigen specific receptors which are essential to the immune response and are present on the cell surface of T lymphocytes. Recognize peptide-major histocompatibility (MH) (pMH) complexes that are displayed by antigen presenting cells (APC), a prerequisite for efficient T cell adaptive immunity against pathogens. Binding of alpha-beta TR to pMH complex initiates TR-CD3 clustering on the cell surface and intracellular activation of LCK that phosphorylates the ITAM motifs of CD3G, CD3D, CD3E and CD247 enabling the recruitment of ZAP70. In turn ZAP70 phosphorylates LAT, which recruits numerous signaling molecules to form the LAT signalosome. The LAT signalosome propagates signal branching to three major signaling pathways, the calcium, the mitogen-activated protein kinase (MAPK) kinase and the nuclear factor NF-kappa-B (NF-kB) pathways, leading to the mobilization of transcription factors that are critical for gene expression and essential for T cell growth and differentiation. The T cell repertoire is generated in the thymus, by V-(D)-J rearrangement. This repertoire is then shaped by intrathymic selection events to generate a peripheral T cell pool of self-MH restricted, non-autoaggressive T cells. Post-thymic interaction of alpha-beta TR with the pMH complexes shapes TR structural and functional avidity. The protein is T cell receptor beta variable 3-1 of Homo sapiens (Human).